We begin with the raw amino-acid sequence, 318 residues long: C1GALT1-specific chaperone 1 (318 aa).

The Cytoplasmic portion of the chain corresponds to 1–6 (MLSESS). A helical; Signal-anchor for type II membrane protein membrane pass occupies residues 7-26 (SFLKGVMLGSIFCALITMLG). Over 27-318 (HIRIGHGSRM…FLPPNGSDND (292 aa)) the chain is Lumenal.

Belongs to the glycosyltransferase 31 family. Beta3-Gal-T subfamily. As to quaternary structure, associates with core 1 beta-3-galactosyltransferase (C1GALT1), probably not with the soluble active form.

It is found in the membrane. Functionally, probable chaperone required for the generation of 1 O-glycan Gal-beta1-3GalNAc-alpha1-Ser/Thr (T antigen), which is a precursor for many extended O-glycans in glycoproteins. Probably acts as a specific molecular chaperone assisting the folding/stability of core 1 beta-3-galactosyltransferase (C1GALT1). The sequence is that of C1GALT1-specific chaperone 1 (C1GALT1C1) from Bos taurus (Bovine).